The following is a 1129-amino-acid chain: ISWI chromatin-remodeling complex ATPase ISW1 (1129 aa).

The segment at 144–177 is disordered; that stretch reads KANGKGKGKHQDVRRRKTEHEEDAELLKEEDSDD. The span at 147 to 160 shows a compositional bias: basic residues; that stretch reads GKGKGKHQDVRRRK. Residues 164–177 are compositionally biased toward acidic residues; the sequence is EEDAELLKEEDSDD. The Helicase ATP-binding domain occupies 208 to 373; the sequence is VSLHKNKIAG…WALLNFLLPD (166 aa). 221–228 provides a ligand contact to ATP; the sequence is DEMGLGKT. The DEAH box signature appears at 324 to 327; the sequence is DEAH. The Helicase C-terminal domain occupies 506 to 657; that stretch reads VLDKLLKKLK…QLVIQQNRTS (152 aa). A disordered region spans residues 683–705; that stretch reads FKSGTSTGSAGTPEPGSGEKGDD. Thr694 carries the post-translational modification Phosphothreonine. Ser846 is modified (phosphoserine). 2 SANT domains span residues 882–935 and 988–1052; these read EGFT…SNIE and NKRT…LLQC. Positions 1073 to 1108 are enriched in basic and acidic residues; the sequence is KEDENGKRIREEFADQTANEKENVDGVESKKAKIED. The segment at 1073–1129 is disordered; sequence KEDENGKRIREEFADQTANEKENVDGVESKKAKIEDTSNVGTEQLVAEKIPENETTH.

It belongs to the SNF2/RAD54 helicase family. ISWI subfamily. Component of the ISW1A complex, which at least consists of ISW1 and IOC3. Component of the ISW1B complex, which at least consists of ISW1, IOC2 and IOC4.

It is found in the nucleus. Catalytic component of ISW1-type complexes, which act by remodeling the chromatin by catalyzing an ATP-dependent alteration in the structure of nucleosomal DNA. They are involved in coordinating transcriptional repression, activation and elongation phases. The ISW1A complex represses gene expression at initiation through specific positioning of a promoter proximal dinucleosome. The ISW1B complex acts within coding regions to control the amount of RNA polymerase II released into productive elongation and to coordinate elongation with termination and pre-mRNA processing. The sequence is that of ISWI chromatin-remodeling complex ATPase ISW1 (ISW1) from Saccharomyces cerevisiae (strain ATCC 204508 / S288c) (Baker's yeast).